A 355-amino-acid chain; its full sequence is Anhydro-N-acetylmuramic acid kinase (355 aa).

ATP is bound at residue 9 to 16; that stretch reads GTSLDGVD.

Belongs to the anhydro-N-acetylmuramic acid kinase family.

The enzyme catalyses 1,6-anhydro-N-acetyl-beta-muramate + ATP + H2O = N-acetyl-D-muramate 6-phosphate + ADP + H(+). It functions in the pathway amino-sugar metabolism; 1,6-anhydro-N-acetylmuramate degradation. The protein operates within cell wall biogenesis; peptidoglycan recycling. In terms of biological role, catalyzes the specific phosphorylation of 1,6-anhydro-N-acetylmuramic acid (anhMurNAc) with the simultaneous cleavage of the 1,6-anhydro ring, generating MurNAc-6-P. Is required for the utilization of anhMurNAc either imported from the medium or derived from its own cell wall murein, and thus plays a role in cell wall recycling. The protein is Anhydro-N-acetylmuramic acid kinase of Paramagnetospirillum magneticum (strain ATCC 700264 / AMB-1) (Magnetospirillum magneticum).